The sequence spans 138 residues: Transcriptional activator protein (138 aa).

The segment covering 1–20 (MTGSKKTPSTSPSKKLSSPP) has biased composition (low complexity). The tract at residues 1 to 23 (MTGSKKTPSTSPSKKLSSPPEVK) is disordered. Positions 23–37 (KLRHRFAKRQIRRRR) match the Nuclear localization signal motif. A zinc finger lies at 42–59 (CGCSIYIHINCVNNGFTH). The segment covering 85-106 (NTASGDANVHTQPGISHSSQSK) has biased composition (polar residues). Residues 85–123 (NTASGDANVHTQPGISHSSQSKPQHEDSVGSPQSLLQLP) form a disordered region. Low complexity predominate over residues 113 to 123 (VGSPQSLLQLP). A transactivation region spans residues 124 to 138 (SLDDVDDDFWADLLK).

The protein belongs to the geminiviridae transcriptional activator protein family. Monomer. Homodimer. Homooligomer. Self-interaction correlates with nuclear localization and efficient activation of transcription. Monomers suppress local silencing by interacting with and inactivating host adenosine kinase 2 (ADK2) in the cytoplasm. Interacts with and inhibits host SNF1 kinase. Binds to ssDNA. In terms of processing, phosphorylated.

The protein resides in the host nucleus. The protein localises to the host cytoplasm. Functionally, strong activator of the late viral genes promoters. Enhances the expression of the capsid protein and nuclear shuttle protein. Acts as a suppressor of RNA-mediated gene silencing, also known as post-transcriptional gene silencing (PTGS), a mechanism of plant viral defense that limits the accumulation of viral RNAs. Suppresses the host RNA silencing by inhibiting adenosine kinase 2 (ADK2), a kinase involved in a general methylation pathway. Also suppresses the host basal defense by interacting with and inhibiting SNF1 kinase, a key regulator of cell metabolism implicated in innate antiviral defense. Determines pathogenicity. The sequence is that of Transcriptional activator protein from Pepper huasteco yellow vein virus (PHYVV).